Here is a 157-residue protein sequence, read N- to C-terminus: MSWYRAASVGRRLVASGRILAGRRGAAGAAGSGMGNSTSSFWGKSATTPVNQIQETISNNCVVIFSKSSCSYCSMAKKIFHDMNVNYKVVELDMVEYGSQFQEALYKMTGERTVPRIFVNGIFIGGAADTHRLHKEGKLLPLVHQCYLNKSKRKDVE.

Residues 1–19 (MSWYRAASVGRRLVASGRI) constitute a mitochondrion transit peptide. Residues 50 to 150 (VNQIQETISN…PLVHQCYLNK (101 aa)) enclose the Glutaredoxin domain. [2Fe-2S] cluster is bound at residue Cys61. Lys67 provides a ligand contact to glutathione. An S-glutathionyl cysteine; alternate modification is found at Cys70. Cysteines 70 and 73 form a disulfide. 2 residues coordinate glutathione: Gln102 and Val114. Cys146 provides a ligand contact to [2Fe-2S] cluster.

This sequence belongs to the glutaredoxin family. As to quaternary structure, monomer; active form. Homodimer; inactive form. The homodimer is probably linked by 1 2Fe-2S cluster.

Its subcellular location is the mitochondrion. It localises to the nucleus. Its activity is regulated as follows. The 2Fe-2S present in the homodimer leads to inactivation of the enzyme. The 2Fe-2S may serve as a redox sensor: the presence of one-electron oxidants or reductants leading to the loss of the 2Fe-2S cluster, subsequent monomerization and activation of the enzyme. Its function is as follows. Glutathione-dependent oxidoreductase that facilitates the maintenance of mitochondrial redox homeostasis upon induction of apoptosis by oxidative stress. Involved in response to hydrogen peroxide and regulation of apoptosis caused by oxidative stress. Acts as a very efficient catalyst of monothiol reactions because of its high affinity for protein glutathione-mixed disulfides. Can receive electrons not only from glutathione (GSH), but also from thioredoxin reductase supporting both monothiol and dithiol reactions. Efficiently catalyzes both glutathionylation and deglutathionylation of mitochondrial complex I, which in turn regulates the superoxide production by the complex. Overexpression decreases the susceptibility to apoptosis and prevents loss of cardiolipin and cytochrome c release. In Rattus norvegicus (Rat), this protein is Glutaredoxin-2, mitochondrial (Glrx2).